The primary structure comprises 187 residues: MVNEFDKLKAGKLLLASANMLESSFKRTVLVVCEHNERGSLAFILNRPMEFKVCEAVSGFEEVEERLHMGGPVEVDTVHFLHSRGDLIDGSLEILPGIFWGGDKNELSYLLNTGVMMPSEIRFFLGYAGWSAGQLEAEFEEGAWYTAEASKDIIFSDAYERMWGRTVRSKGGEYQIVANSPELPGLN.

Belongs to the UPF0301 (AlgH) family.

The polypeptide is UPF0301 protein Ppha_2142 (Pelodictyon phaeoclathratiforme (strain DSM 5477 / BU-1)).